A 150-amino-acid chain; its full sequence is MDLSNLKPAEGSVRKNSKRIGRGEGSGKGGTATRGHKGAKSRSGYSKKIGFEGGQMPLQRRVPKFGFTNRNRKVYQGINLDTLQNLVDEGRIKDTVDMDVLVENGLAGRNELVKILGRGELKAKLKISVHKFTASAKEAIEAAGGEVVTL.

A disordered region spans residues 1 to 52; that stretch reads MDLSNLKPAEGSVRKNSKRIGRGEGSGKGGTATRGHKGAKSRSGYSKKIGFE. Gly residues predominate over residues 23–32; that stretch reads GEGSGKGGTA.

Belongs to the universal ribosomal protein uL15 family. As to quaternary structure, part of the 50S ribosomal subunit.

Binds to the 23S rRNA. The sequence is that of Large ribosomal subunit protein uL15 from Christiangramia forsetii (strain DSM 17595 / CGMCC 1.15422 / KT0803) (Gramella forsetii).